A 556-amino-acid polypeptide reads, in one-letter code: ATP synthase subunit beta-2, mitochondrial (556 aa).

The segment covering 1-20 has biased composition (low complexity); it reads MASRRVLSSLLRSSSGRSAA. The segment at 1-37 is disordered; the sequence is MASRRVLSSLLRSSSGRSAAKLVNRNPRLPSPSPARH. A mitochondrion-targeting transit peptide spans 1-51; it reads MASRRVLSSLLRSSSGRSAAKLVNRNPRLPSPSPARHAAPCSYLLGRVAEY. A Phosphoserine modification is found at Ser59. 231–238 is a binding site for ATP; it reads GGAGVGKT.

It belongs to the ATPase alpha/beta chains family. In terms of assembly, F-type ATPases have 2 components, CF(1) - the catalytic core - and CF(0) - the membrane proton channel. CF(1) has five subunits: alpha(3), beta(3), gamma(1), delta(1), epsilon(1). CF(0) has three main subunits: a, b and c.

The protein resides in the mitochondrion. It localises to the mitochondrion inner membrane. It catalyses the reaction ATP + H2O + 4 H(+)(in) = ADP + phosphate + 5 H(+)(out). Functionally, mitochondrial membrane ATP synthase (F(1)F(0) ATP synthase or Complex V) produces ATP from ADP in the presence of a proton gradient across the membrane which is generated by electron transport complexes of the respiratory chain. F-type ATPases consist of two structural domains, F(1) - containing the extramembraneous catalytic core, and F(0) - containing the membrane proton channel, linked together by a central stalk and a peripheral stalk. During catalysis, ATP synthesis in the catalytic domain of F(1) is coupled via a rotary mechanism of the central stalk subunits to proton translocation. Subunits alpha and beta form the catalytic core in F(1). Rotation of the central stalk against the surrounding alpha(3)beta(3) subunits leads to hydrolysis of ATP in three separate catalytic sites on the beta subunits. The chain is ATP synthase subunit beta-2, mitochondrial from Arabidopsis thaliana (Mouse-ear cress).